The sequence spans 498 residues: Hexokinase-3 (498 aa).

Residues 4-24 (VAVAFAAVAVVAACSVAAVMV) form a helical membrane-spanning segment. In terms of domain architecture, Hexokinase spans 35–494 (RTVVEILKEL…SSIGSALLVA (460 aa)). A hexokinase small subdomain region spans residues 90–227 (TGREKGTYYA…GLDMHVAALV (138 aa)). ADP is bound by residues Gly104 and Thr105. Residues Thr193, Lys194, Asn228, and Asp229 each coordinate D-glucose. Residues 228–483 (NDTVGALSLG…QYVVVKAMED (256 aa)) are hexokinase large subdomain. Thr252 is an ADP binding site. D-glucose is bound by residues Asn255, Glu283, and Glu314. Gly448 serves as a coordination point for ADP.

It belongs to the hexokinase family. As to expression, expressed in roots, emerging lateral roots, vascular tissues of cotyledons, roots and leaves, root and shoot meristems, anther filaments and funiculi of mature seeds.

It is found in the mitochondrion outer membrane. The catalysed reaction is a D-hexose + ATP = a D-hexose 6-phosphate + ADP + H(+). It carries out the reaction D-fructose + ATP = D-fructose 6-phosphate + ADP + H(+). It catalyses the reaction D-glucose + ATP = D-glucose 6-phosphate + ADP + H(+). It functions in the pathway carbohydrate metabolism; hexose metabolism. It participates in carbohydrate degradation; glycolysis; D-glyceraldehyde 3-phosphate and glycerone phosphate from D-glucose: step 1/4. Functionally, fructose and glucose phosphorylating enzyme. May be involved in the phosphorylation of glucose during the export from mitochondrion to cytosol. Plays a role in plant growth and development, perhaps by mediating cross-talk between glucose and hormone response pathways. Involved in root hair cell development by mediating certain aspects of cross talk between glucose and ethylene response pathways. This chain is Hexokinase-3, found in Arabidopsis thaliana (Mouse-ear cress).